A 190-amino-acid chain; its full sequence is Cathelicidin-3 (190 aa).

Positions 1 to 29 are cleaved as a signal peptide; that stretch reads METQMASPSLGRCSLWLLLLGLLLPSASA. A Pyrrolidone carboxylic acid modification is found at Gln30. Residues 30 to 130 constitute a propeptide that is removed on maturation; sequence QALSYREAVL…DLNCNELQSV (101 aa). 2 disulfides stabilise this stretch: Cys85-Cys96 and Cys107-Cys124. A compositionally biased stretch (basic residues) spans 133-151; that stretch reads LRPRRPRLPRPRPRPRPRP. Positions 133–190 are disordered; sequence LRPRRPRLPRPRPRPRPRPRSLPLPRPQPRRIPRPILLPWRPPRPIPRPQPQPIPRWL. The span at 172 to 190 shows a compositional bias: pro residues; sequence WRPPRPIPRPQPQPIPRWL.

It belongs to the cathelicidin family.

The protein localises to the secreted. In terms of biological role, exerts, in vitro, a potent antimicrobial activity. Probably due to an impairment of the function of the respiratory chain and of energy-dependent activities in the inner membrane of susceptible microorganisms. This chain is Cathelicidin-3 (CATHL3), found in Ovis aries (Sheep).